The chain runs to 238 residues: Protein TIFY 3A (238 aa).

Residues 39 to 74 (EPDASTQLTIIFGGSCRVFNGVPAQKVQEIIRIAFA) enclose the Tify 1 domain. Residues 101-120 (PIARRRSLQRFLEKRRDRST) carry the Jas 1 motif. The short motif at 103–110 (ARRRSLQR) is the Nuclear localization signal 1 element. The 36-residue stretch at 125-160 (SMILPSQLTIIFGGSFSVFDGIPAEKVQEILHIAAA) folds into the Tify 2 domain. The short motif at 197–222 (PIARRRSLQRFFEKRRHRFVHTKPYS) is the Jas 2 element. Residues 199–206 (ARRRSLQR) carry the Nuclear localization signal 2 motif. Positions 219–238 (KPYSATTSEADKNETSPIVT) are disordered.

It belongs to the TIFY/JAZ family. In terms of assembly, interacts with MYC2, MYB21, MYB24, AFPH2/NINJA, TIFY10A/JAZ1, TIFY10B/JAZ2, TIFY6B/JAZ3, TIFY6A/JAZ4, TIFY7/JAZ9 and TIFY9/JAZ10. Post-translationally, ubiquitinated. Targeted for degradation by the SCF(COI1) E3 ubiquitin ligase-proteasome pathway during jasmonate signaling.

The protein resides in the nucleus. In terms of biological role, repressor of jasmonate (JA) responses. Targets MYC2, MYC3 and MYC4 that are JA-dependent transcription activators. The protein is Protein TIFY 3A (TIFY3A) of Arabidopsis thaliana (Mouse-ear cress).